We begin with the raw amino-acid sequence, 317 residues long: Cyclin-dependent kinase 1 (317 aa).

The region spanning 7–292 is the Protein kinase domain; that stretch reads YQRQEKVGEG…AKRALIHPYF (286 aa). ATP contacts are provided by residues 13 to 21 and K37; that span reads VGEGTYGVV. Residue T17 is modified to Phosphothreonine. At Y18 the chain carries Phosphotyrosine; by SWE1. D133 acts as the Proton acceptor in catalysis. A Phosphothreonine; by CAK modification is found at T166. Residues 296–317 are disordered; it reads DDRDHNNYNEDNIGIDKHQNMQ.

Belongs to the protein kinase superfamily. CMGC Ser/Thr protein kinase family. CDC2/CDKX subfamily. In terms of assembly, forms several complexes with cyclins CCN1, CLB2, CLN3, and HGC1. The CDC28-CCN1 complex associates with septin CDC11 upon hyphal induction. Interacts with IQG1, RFA2, and HSP90. Phosphorylated at Tyr-18 by SWE1 in a cell cycle-dependent manner. Yeast-form and hyphal cells display similar dynamics of phosphorylation and dephosphorylation of Tyr-18. Tyr-18 phosphorylation leads to inhibition of CDC28 kinase activity.

The enzyme catalyses L-seryl-[protein] + ATP = O-phospho-L-seryl-[protein] + ADP + H(+). It carries out the reaction L-threonyl-[protein] + ATP = O-phospho-L-threonyl-[protein] + ADP + H(+). Its activity is regulated as follows. Phosphorylation at Thr-17 or Tyr-18 inactivates the enzyme, while phosphorylation at Thr-166 activates it. Its function is as follows. Cyclin-dependent kinase that acts as a master regulator of the mitotic and meiotic cell cycles. May drive the G1-S transition. Plays a role in mitotic exit. Plays a role in the expression of morphology-related transcription factors, and especially hyphae-specific genes. Binds distinct cyclin subunits as cells progress through the division cycle or flamentous growth. The CDC28-CLB2 complex regulates cytokinesis partly by phosphorylating the actomyosin ring component IQG1. The CDC28-CLN3 complex phosphorylates SLA1 which regulates cortical actin patch dynamics. The CDC28-CCN1 complex phosphorylates CDC11 and SEC2 upon induction of filamentous growth. The CDC28-HGC1 complex also phosphorylates SEC2 and maintains CDC11 phosphorylation throughout hyphal growth. Moreover, the CDC28-HGC1 complex phosphorylates and prevents RGA2 from localizing to hyphal tips, leading to localized CDC42 activation for hyphal extension. CDC28-HGC1 phosphorylation of EFG1 represses cell separation genes during hyphal growth. Additional substrates for CDC28 are RFA2 in G1-phase; MOB2, which is required for the maintenance of polarisome components and for inhibition of cell separation in hyphae; and GIN4 to regulate its association to SEP7 and subsequent septin ring assembly. The sequence is that of Cyclin-dependent kinase 1 from Candida albicans (strain SC5314 / ATCC MYA-2876) (Yeast).